The primary structure comprises 396 residues: Putative N(4)-(beta-N-acetylglucosaminyl)-L-asparaginase GG24090 (396 aa).

The N-terminal stretch at 1 to 23 is a signal peptide; the sequence is MKRHLGTCLWVLCLASTAFSSLA. 2 disulfide bridges follow: cysteine 100-cysteine 105 and cysteine 199-cysteine 215. Catalysis depends on threonine 246, which acts as the Nucleophile. Substrate-binding positions include 274 to 277 and 297 to 300; these read RVGD and TGDG. A disulfide bond links cysteine 357 and cysteine 384.

The protein belongs to the Ntn-hydrolase family. In terms of assembly, heterotetramer of two alpha and two beta chains arranged as a dimer of alpha/beta heterodimers. In terms of processing, cleaved into an alpha and beta chain by autocatalysis; this activates the enzyme. The N-terminal residue of the beta subunit is responsible for the nucleophile hydrolase activity.

The enzyme catalyses N(4)-(beta-N-acetyl-D-glucosaminyl)-L-asparagine + H2O = N-acetyl-beta-D-glucosaminylamine + L-aspartate + H(+). Its function is as follows. Cleaves the GlcNAc-Asn bond which joins oligosaccharides to the peptide of asparagine-linked glycoproteins. The sequence is that of Putative N(4)-(beta-N-acetylglucosaminyl)-L-asparaginase GG24090 from Drosophila erecta (Fruit fly).